Here is a 219-residue protein sequence, read N- to C-terminus: Lipid transferase CIDEB (219 aa).

The CIDE-N domain maps to P34–P110.

This sequence belongs to the CIDE family. Interacts with DFFA. Interacts with DFFB; inhibited by DFFB. Interacts with APOB. Interacts with PREB/SEC12; facilitating loading of SCAP-SREBP into COPII vesicles. As to quaternary structure, (Microbial infection) Interacts (via N-terminus) with HCV non-structural protein 5A (via N-terminus); this interaction seems to regulate the association of HCV particles with ApoE. In terms of tissue distribution, highly expressed in liver and small intestine and, at lower levels, in colon, kidney and spleen.

It localises to the lipid droplet. The protein resides in the endoplasmic reticulum membrane. Its subcellular location is the golgi apparatus. It is found in the cytoplasmic vesicle. The protein localises to the COPI-coated vesicle. In terms of biological role, lipid transferase specifically expressed in hepatocytes, which promotes unilocular lipid droplet formation by mediating lipid droplet fusion. Lipid droplet fusion promotes their enlargement, restricting lipolysis and favoring lipid storage. Localizes on the lipid droplet surface, at focal contact sites between lipid droplets, and mediates atypical lipid droplet fusion by promoting directional net neutral lipid transfer from the smaller to larger lipid droplets. The transfer direction may be driven by the internal pressure difference between the contacting lipid droplet pair. Promotes lipid exchange and lipid droplet fusion in both small and large lipid droplet-containing hepatocytes. In addition to its role in lipid droplet fusion, also involved in cytoplasmic vesicle biogenesis and transport. Required for very-low-density lipoprotein (VLDL) lipidation and maturation. Probably involved in the biogenesis of VLDL transport vesicles by forming a COPII vesicle coat and facilitating the formation of endoplasmic reticulum-derived large vesicles. Also involved in sterol-regulated export of the SCAP-SREBP complex, composed of SCAP, SREBF1/SREBP1 and SREBF2/SREBP2, by promoting loading of SCAP-SREBP into COPII vesicles. May also activate apoptosis. Its function is as follows. (Microbial infection) Involved in Hepatatis C virus (HCV) assembly and required for HCV entry into hepatocytes. The polypeptide is Lipid transferase CIDEB (Homo sapiens (Human)).